Here is a 479-residue protein sequence, read N- to C-terminus: MTAPSATAFSSATTQPTTEGNASMRKRTIPVVPSVPERKWDPKAPKHIQEQPWTMQNWWRHLNWLHCMLIFGLPMIAIYGVFTTPLQTKTLIFAIIYYAYSGLGITAGYHRLWSHRAYKAKKPLEYFLAAGGAAAFEGSIRWWSRDHRAHHRYTDTDKDPYNVKKGFWYAHVGWMIILQNPRRIGRSDVSDLNSDPFVMFNHRHFLPIASFMAFIFPSLFCGLLWGDYRGGYFYAGVCRLVFVHHATFCVNSLAHLIGSQPFDDTNSARNHFITALVTLGEGNHNYHHAFPNDYRNGLRWYEYDPTKIFIYIASLFGLAYNLNTFPDNEIQKGIVQQKQKVLDRWRAKLNWGIPLEQLPVMEFEDFLEQSKTRPLVLINGVVHDMTGFEHPGGQGLLRSAFGKDATAAFNGGVYDHTNGAHNLLSTYRVAVVRGGMEVEVWKSGAGAQLPMKDTQGQKIVRVGEQITRIQPPIEAAAAN.

Residues 1–18 show a composition bias toward low complexity; that stretch reads MTAPSATAFSSATTQPTT. Residues 1-28 are disordered; the sequence is MTAPSATAFSSATTQPTTEGNASMRKRT. At 1-61 the chain is on the cytoplasmic side; the sequence is MTAPSATAFS…PWTMQNWWRH (61 aa). A helical membrane pass occupies residues 62 to 82; sequence LNWLHCMLIFGLPMIAIYGVF. The Lumenal segment spans residues 83-89; it reads TTPLQTK. Residues 90 to 110 form a helical membrane-spanning segment; it reads TLIFAIIYYAYSGLGITAGYH. Fe cation-binding residues include His-110, His-115, His-147, His-150, and His-151. Residues 110-115 carry the Histidine box-1 motif; that stretch reads HRLWSH. Over 111-204 the chain is Cytoplasmic; the sequence is RLWSHRAYKA…DPFVMFNHRH (94 aa). The Histidine box-2 motif lies at 147 to 151; sequence HRAHH. Residues 205-225 traverse the membrane as a helical segment; that stretch reads FLPIASFMAFIFPSLFCGLLW. Topologically, residues 226-229 are lumenal; the sequence is GDYR. The chain crosses the membrane as a helical span at residues 230 to 250; the sequence is GGYFYAGVCRLVFVHHATFCV. Topologically, residues 251 to 479 are cytoplasmic; the sequence is NSLAHLIGSQ…QPPIEAAAAN (229 aa). His-255, His-284, His-287, and His-288 together coordinate Fe cation. Residues 284 to 288 carry the Histidine box-3 motif; that stretch reads HNYHH. Residues 357 to 433 enclose the Cytochrome b5 heme-binding domain; sequence QLPVMEFEDF…LSTYRVAVVR (77 aa). His-390 and His-416 together coordinate heme.

This sequence belongs to the fatty acid desaturase type 1 family. Fe(2+) is required as a cofactor.

It localises to the membrane. The catalysed reaction is octadecanoyl-CoA + 2 Fe(II)-[cytochrome b5] + O2 + 2 H(+) = (9Z)-octadecenoyl-CoA + 2 Fe(III)-[cytochrome b5] + 2 H2O. Stearoyl-CoA desaturase that utilizes O(2) and electrons from reduced cytochrome b5 to introduce the first double bond into saturated fatty acyl-CoA substrates. Catalyzes the insertion of a cis double bond at the delta-9 position into fatty acyl-CoA substrates including palmitoyl-CoA and stearoyl-CoA. Contributes to the biosynthesis of membrane phospholipids, cholesterol esters and triglycerides. The chain is Probable acyl-CoA desaturase from Schizosaccharomyces pombe (strain 972 / ATCC 24843) (Fission yeast).